Consider the following 155-residue polypeptide: Nucleoside diphosphate kinase, cytosolic (155 aa).

ATP contacts are provided by lysine 16, phenylalanine 64, arginine 92, threonine 98, arginine 109, and asparagine 119. Histidine 122 (pros-phosphohistidine intermediate) is an active-site residue.

It belongs to the NDK family. As to quaternary structure, homohexamer. Requires Mg(2+) as cofactor.

It is found in the cytoplasm. It catalyses the reaction a 2'-deoxyribonucleoside 5'-diphosphate + ATP = a 2'-deoxyribonucleoside 5'-triphosphate + ADP. The catalysed reaction is a ribonucleoside 5'-diphosphate + ATP = a ribonucleoside 5'-triphosphate + ADP. Functionally, major role in the synthesis of nucleoside triphosphates other than ATP. In Dictyostelium discoideum (Social amoeba), this protein is Nucleoside diphosphate kinase, cytosolic (ndkC-1).